The sequence spans 217 residues: Large ribosomal subunit protein uL3 (217 aa).

The segment covering 134-146 has biased composition (polar residues); the sequence is GRATHGNSRSHNV. Residues 134-154 form a disordered region; the sequence is GRATHGNSRSHNVPGSIGMAQ. Q154 carries the post-translational modification N5-methylglutamine.

The protein belongs to the universal ribosomal protein uL3 family. In terms of assembly, part of the 50S ribosomal subunit. Forms a cluster with proteins L14 and L19. In terms of processing, methylated by PrmB.

One of the primary rRNA binding proteins, it binds directly near the 3'-end of the 23S rRNA, where it nucleates assembly of the 50S subunit. This Burkholderia lata (strain ATCC 17760 / DSM 23089 / LMG 22485 / NCIMB 9086 / R18194 / 383) protein is Large ribosomal subunit protein uL3.